Reading from the N-terminus, the 241-residue chain is ATP synthase subunit 4, mitochondrial (241 aa).

The transit peptide at 1-35 (MASRLARTAVGAARLRPSVVPRVLPALSTVASPRY) directs the protein to the mitochondrion.

This sequence belongs to the eukaryotic ATPase B chain family. F-type ATPases have 2 components, CF(1) - the catalytic core - and CF(0) - the membrane proton channel. In yeast, the dimeric form of ATP synthase consists of 17 polypeptides: alpha, beta, gamma, delta, epsilon, 4 (B), 5 (OSCP), 6 (A), 8, 9 (C), d, E (Tim11), f, g, h, i/j and k.

Its subcellular location is the mitochondrion. The protein resides in the mitochondrion inner membrane. Functionally, mitochondrial membrane ATP synthase (F(1)F(0) ATP synthase or Complex V) produces ATP from ADP in the presence of a proton gradient across the membrane which is generated by electron transport complexes of the respiratory chain. F-type ATPases consist of two structural domains, F(1) - containing the extramembraneous catalytic core, and F(0) - containing the membrane proton channel, linked together by a central stalk and a peripheral stalk. During catalysis, ATP synthesis in the catalytic domain of F(1) is coupled via a rotary mechanism of the central stalk subunits to proton translocation. Part of the complex F(0) domain and the peripheric stalk, which acts as a stator to hold the catalytic alpha(3)beta(3) subcomplex and subunit a/atp6 static relative to the rotary elements. This Neurospora crassa (strain ATCC 24698 / 74-OR23-1A / CBS 708.71 / DSM 1257 / FGSC 987) protein is ATP synthase subunit 4, mitochondrial (atp-3).